A 247-amino-acid chain; its full sequence is Ice-binding protein (247 aa).

A signal peptide spans 1 to 19; sequence MTFSILSIFVFGLISSSVA. The N-linked (GlcNAc...) asparagine glycan is linked to Asn219.

It belongs to the ice-binding protein family.

It is found in the secreted. Its function is as follows. Binds ice crystals and most probably inhibits their growth in order to prevent cell damage from extracellular ice. The protein is Ice-binding protein of Flammulina populicola (Enokitake mushroom).